Reading from the N-terminus, the 829-residue chain is Receptor-type tyrosine-protein phosphatase alpha (829 aa).

A signal peptide spans 1 to 19; the sequence is MDSWFILVLFGSGLIHVSA. Residues 20-142 lie on the Extracellular side of the membrane; sequence NNATTVSPSL…ETFPPADETP (123 aa). Residues Asn-21, Asn-47, Asn-51, Asn-68, Asn-80, Asn-86, Asn-104, and Asn-124 are each glycosylated (N-linked (GlcNAc...) asparagine). Residues 79–106 form a disordered region; the sequence is VNSSHSDNGTRRAASTESGGTTISPNGS. The chain crosses the membrane as a helical span at residues 143–166; it reads IIAVMVALSSLLVIVFIIIVLYML. Residues 167–829 lie on the Cytoplasmic side of the membrane; sequence RFKKYKQAGS…DAFSDYANFK (663 aa). Residues Ser-202 and Ser-204 each carry the phosphoserine modification. 2 consecutive Tyrosine-protein phosphatase domains span residues 232-528 and 560-818; these read FREE…LLEH and LEEE…VQEY. Substrate-binding positions include Asp-437, 469–475, and Gln-513; that span reads CSAGVGR. Cys-469 serves as the catalytic Phosphocysteine intermediate. Cys-759 (phosphocysteine intermediate) is an active-site residue. Residue Tyr-825 is modified to Phosphotyrosine.

Belongs to the protein-tyrosine phosphatase family. Receptor class 4 subfamily. As to quaternary structure, part of a complex comprised of PTPRA, BCAR1, BCAR3 (via SH2 domain), and SRC. Within the complex, interacts (when phosphorylated on Tyr-825) with BCAR3 (via SH2 domain). Interacts with GRB2. Integrin binding to extracellular matrix induces phosphorylation at Tyr-825 which induces PTPRA localization and recruitment of BCAR3, BCAR1 and CRK to focal adhesions. As to expression, widely expressed. Highest expression in brain and kidney.

The protein localises to the cell membrane. Its subcellular location is the cell junction. It is found in the focal adhesion. It carries out the reaction O-phospho-L-tyrosyl-[protein] + H2O = L-tyrosyl-[protein] + phosphate. Tyrosine protein phosphatase which is involved in integrin-mediated focal adhesion formation. Following integrin engagement, specifically recruits BCAR3, BCAR1 and CRK to focal adhesions thereby promoting SRC-mediated phosphorylation of BRAC1 and the subsequent activation of PAK and small GTPase RAC1 and CDC42. The chain is Receptor-type tyrosine-protein phosphatase alpha (Ptpra) from Mus musculus (Mouse).